The chain runs to 372 residues: MSPGLDLEQSFSQALEGLGLSAQAARMLWLPFPMLLVLVAAVVGVLVTVWLERKISAAVQQRVGPEYAGALGVLQPLADGLKLLVKEDIIPDRADSILFTLGPVLVVVPVILSWLIVPFGQNLLISDVGVGIFLWISLSSVQPIGLLMSGYASNNKYSLLGGLRAAAQSISYEIPLALAVLAVVMMSNSLSTVDIVNQQTGAGVLSWNIWRQPVGFLIFWICALAECERLPFDLPEAEEELVAGYQTEYSGMKFALFYLGSYINLVLSALLVSILYLGGWGFPIPVEWLASWLGQPIDAPLVQLITGTVGIVMTVLKAYLLVFIAILLRWTTPRVRIDQLLDLGWKFLLPLALVNLLVTAALKLAFPVAFGG.

The next 8 helical transmembrane spans lie at 27–47 (MLWL…GVLV), 97–117 (ILFT…WLIV), 128–148 (VGVG…GLLM), 166–186 (AAQS…VVMM), 204–224 (VLSW…ICAL), 266–286 (VLSA…PIPV), 308–328 (TVGI…AILL), and 347–367 (FLLP…LAFP).

The protein belongs to the complex I subunit 1 family. As to quaternary structure, NDH-1 is composed of at least 11 different subunits.

Its subcellular location is the cellular thylakoid membrane. It catalyses the reaction a plastoquinone + NADH + (n+1) H(+)(in) = a plastoquinol + NAD(+) + n H(+)(out). The enzyme catalyses a plastoquinone + NADPH + (n+1) H(+)(in) = a plastoquinol + NADP(+) + n H(+)(out). Its function is as follows. NDH-1 shuttles electrons from an unknown electron donor, via FMN and iron-sulfur (Fe-S) centers, to quinones in the respiratory and/or the photosynthetic chain. The immediate electron acceptor for the enzyme in this species is believed to be plastoquinone. Couples the redox reaction to proton translocation, and thus conserves the redox energy in a proton gradient. The chain is NAD(P)H-quinone oxidoreductase subunit 1 from Synechococcus sp. (strain CC9311).